Here is a 334-residue protein sequence, read N- to C-terminus: Glyceraldehyde-3-phosphate dehydrogenase 2 (334 aa).

Residues 12 to 13 (RI), Asp35, and Arg79 contribute to the NAD(+) site. D-glyceraldehyde 3-phosphate contacts are provided by residues 152–154 (SCT), Thr183, Arg198, 211–212 (SG), and Arg234. The active-site Nucleophile is the Cys153. Asn315 provides a ligand contact to NAD(+).

This sequence belongs to the glyceraldehyde-3-phosphate dehydrogenase family. In terms of assembly, homotetramer.

The protein localises to the cytoplasm. The enzyme catalyses D-glyceraldehyde 3-phosphate + phosphate + NAD(+) = (2R)-3-phospho-glyceroyl phosphate + NADH + H(+). It participates in carbohydrate degradation; glycolysis; pyruvate from D-glyceraldehyde 3-phosphate: step 1/5. Inhibited by pentalenolactone (PL). Catalyzes the oxidative phosphorylation of glyceraldehyde 3-phosphate (G3P) to 1,3-bisphosphoglycerate (BPG) using the cofactor NAD. The first reaction step involves the formation of a hemiacetal intermediate between G3P and a cysteine residue, and this hemiacetal intermediate is then oxidized to a thioester, with concomitant reduction of NAD to NADH. The reduced NADH is then exchanged with the second NAD, and the thioester is attacked by a nucleophilic inorganic phosphate to produce BPG. The sequence is that of Glyceraldehyde-3-phosphate dehydrogenase 2 (gap2) from Streptomyces arenae.